Consider the following 293-residue polypeptide: Glycine--tRNA ligase alpha subunit (293 aa).

The protein belongs to the class-II aminoacyl-tRNA synthetase family. Tetramer of two alpha and two beta subunits.

The protein localises to the cytoplasm. It carries out the reaction tRNA(Gly) + glycine + ATP = glycyl-tRNA(Gly) + AMP + diphosphate. This Prochlorococcus marinus (strain MIT 9211) protein is Glycine--tRNA ligase alpha subunit.